The following is a 324-amino-acid chain: Glyoxylate/hydroxypyruvate reductase B (324 aa).

Active-site residues include arginine 237 and glutamate 266. Histidine 285 acts as the Proton donor in catalysis.

Belongs to the D-isomer specific 2-hydroxyacid dehydrogenase family. GhrB subfamily. Homodimer.

It localises to the cytoplasm. It catalyses the reaction glycolate + NADP(+) = glyoxylate + NADPH + H(+). It carries out the reaction (R)-glycerate + NAD(+) = 3-hydroxypyruvate + NADH + H(+). The enzyme catalyses (R)-glycerate + NADP(+) = 3-hydroxypyruvate + NADPH + H(+). Functionally, catalyzes the NADPH-dependent reduction of glyoxylate and hydroxypyruvate into glycolate and glycerate, respectively. The sequence is that of Glyoxylate/hydroxypyruvate reductase B from Salmonella schwarzengrund (strain CVM19633).